The sequence spans 85 residues: ATP synthase subunit c (85 aa).

The next 2 membrane-spanning stretches (helical) occupy residues 10–30 (IAVG…FALL) and 53–73 (FIIA…ALLF).

It belongs to the ATPase C chain family. In terms of assembly, F-type ATPases have 2 components, F(1) - the catalytic core - and F(0) - the membrane proton channel. F(1) has five subunits: alpha(3), beta(3), gamma(1), delta(1), epsilon(1). F(0) has three main subunits: a(1), b(2) and c(10-14). The alpha and beta chains form an alternating ring which encloses part of the gamma chain. F(1) is attached to F(0) by a central stalk formed by the gamma and epsilon chains, while a peripheral stalk is formed by the delta and b chains.

Its subcellular location is the cell inner membrane. F(1)F(0) ATP synthase produces ATP from ADP in the presence of a proton or sodium gradient. F-type ATPases consist of two structural domains, F(1) containing the extramembraneous catalytic core and F(0) containing the membrane proton channel, linked together by a central stalk and a peripheral stalk. During catalysis, ATP synthesis in the catalytic domain of F(1) is coupled via a rotary mechanism of the central stalk subunits to proton translocation. Its function is as follows. Key component of the F(0) channel; it plays a direct role in translocation across the membrane. A homomeric c-ring of between 10-14 subunits forms the central stalk rotor element with the F(1) delta and epsilon subunits. This chain is ATP synthase subunit c, found in Aliivibrio fischeri (strain ATCC 700601 / ES114) (Vibrio fischeri).